The primary structure comprises 861 residues: Probable beta-glucosidase A (861 aa).

Residues 1–19 form the signal peptide; the sequence is MKLGWIEVAALAAASVVSA. N-linked (GlcNAc...) asparagine glycosylation is found at N62, N212, and N253. D281 is an active-site residue. N-linked (GlcNAc...) asparagine glycans are attached at residues N316, N323, N355, N443, N524, N543, N565, N669, N713, and N846.

It belongs to the glycosyl hydrolase 3 family.

It is found in the secreted. It catalyses the reaction Hydrolysis of terminal, non-reducing beta-D-glucosyl residues with release of beta-D-glucose.. The protein operates within glycan metabolism; cellulose degradation. Functionally, beta-glucosidases are one of a number of cellulolytic enzymes involved in the degradation of cellulosic biomass. Catalyzes the last step releasing glucose from the inhibitory cellobiose. In Aspergillus flavus (strain ATCC 200026 / FGSC A1120 / IAM 13836 / NRRL 3357 / JCM 12722 / SRRC 167), this protein is Probable beta-glucosidase A (bglA).